The primary structure comprises 545 residues: T-complex protein 1 subunit gamma (545 aa).

The residue at position 1 (methionine 1) is an N-acetylmethionine. The interval 1–24 (MMGHRPVLVLSQNTKRESGRKVQS) is disordered. The residue at position 11 (serine 11) is a Phosphoserine. Residue lysine 15 forms a Glycyl lysine isopeptide (Lys-Gly) (interchain with G-Cter in SUMO2) linkage. ADP is bound at residue glycine 42. Glycine 42 serves as a coordination point for ATP. Aspartate 93 contributes to the Mg(2+) binding site. Residues glycine 94, threonine 95, threonine 96, serine 97, threonine 162, and lysine 163 each contribute to the ADP site. 3 residues coordinate ATP: glycine 94, threonine 95, and threonine 96. Residue serine 170 is modified to Phosphoserine. Lysine 222 bears the N6-acetyllysine mark. 2 positions are modified to phosphoserine: serine 243 and serine 244. Tyrosine 247 carries the phosphotyrosine modification. Residues lysine 248 and lysine 249 each participate in a glycyl lysine isopeptide (Lys-Gly) (interchain with G-Cter in SUMO2) cross-link. Serine 252 is modified (phosphoserine). An intrachain disulfide couples cysteine 366 to cysteine 372. Residue lysine 381 forms a Glycyl lysine isopeptide (Lys-Gly) (interchain with G-Cter in SUMO2) linkage. Residue glycine 411 coordinates ADP. ATP is bound at residue glycine 411. Phosphothreonine is present on residues threonine 430 and threonine 459. ADP-binding residues include glycine 482, glutamate 483, glutamate 497, and lysine 502. Residue glycine 482 participates in ATP binding. Residue glutamate 497 participates in ATP binding. Residues 526-545 (HKKKGDDQSRQGGAPDAGQE) are disordered.

It belongs to the TCP-1 chaperonin family. Component of the chaperonin-containing T-complex (TRiC), a hexadecamer composed of two identical back-to-back stacked rings enclosing a protein folding chamber. Each ring is made up of eight different subunits: TCP1/CCT1, CCT2, CCT3, CCT4, CCT5, CCT6A/CCT6, CCT7, CCT8. Interacts with PACRG. Interacts with DNAAF4. Interacts with DLEC1.

It is found in the cytoplasm. The enzyme catalyses ATP + H2O = ADP + phosphate + H(+). Functionally, component of the chaperonin-containing T-complex (TRiC), a molecular chaperone complex that assists the folding of actin, tubulin and other proteins upon ATP hydrolysis. The TRiC complex mediates the folding of WRAP53/TCAB1, thereby regulating telomere maintenance. As part of the TRiC complex may play a role in the assembly of BBSome, a complex involved in ciliogenesis regulating transports vesicles to the cilia. The protein is T-complex protein 1 subunit gamma (CCT3) of Bos taurus (Bovine).